The following is a 148-amino-acid chain: Small ribosomal subunit protein uS15 (148 aa).

The disordered stretch occupies residues 1-23 (MRKSKEKGRSGSTRPPQLKKPEW).

Belongs to the universal ribosomal protein uS15 family. Part of the 30S ribosomal subunit.

In Thermofilum pendens (strain DSM 2475 / Hrk 5), this protein is Small ribosomal subunit protein uS15.